Here is a 193-residue protein sequence, read N- to C-terminus: Hydroxyacylglutathione hydrolase-like protein (193 aa).

Residues histidine 54, histidine 56, aspartate 58, histidine 59, and histidine 110 each contribute to the Zn(2+) site.

Belongs to the metallo-beta-lactamase superfamily. Glyoxalase II family. It depends on Zn(2+) as a cofactor.

Its function is as follows. Hydrolase acting on ester bonds. The protein is Hydroxyacylglutathione hydrolase-like protein (HAGHL) of Bos taurus (Bovine).